The primary structure comprises 124 residues: Putative iron-sulfur cluster insertion protein ErpA (124 aa).

The iron-sulfur cluster site is built by Cys-52, Cys-116, and Cys-118.

The protein belongs to the HesB/IscA family. As to quaternary structure, homodimer. Iron-sulfur cluster is required as a cofactor.

Its function is as follows. Required for insertion of 4Fe-4S clusters. In Delftia acidovorans (strain DSM 14801 / SPH-1), this protein is Putative iron-sulfur cluster insertion protein ErpA.